The following is a 659-amino-acid chain: Putative cysteine-rich receptor-like protein kinase 39 (659 aa).

Positions 1 to 27 are cleaved as a signal peptide; the sequence is MGKYSVLMIFIASSLLIVLQNVEIVNA. Gnk2-homologous domains are found at residues 28-134 and 142-253; these read VGCT…NHST and PSVR…LYAF. The Extracellular segment spans residues 28–289; that stretch reads VGCTGSFFNG…KKKGRSIGYG (262 aa). Asn38, Asn64, Asn122, Asn131, Asn157, Asn170, Asn259, and Asn274 each carry an N-linked (GlcNAc...) asparagine glycan. The chain crosses the membrane as a helical span at residues 290–310; that stretch reads GIIAIVVVLTFINILVFIGYI. Residues 311-659 lie on the Cytoplasmic side of the membrane; it reads KVYGRRKESY…DDVFTELSCR (349 aa). One can recognise a Protein kinase domain in the interval 353–619; sequence FSSENTLGQG…PTMSSVIIWL (267 aa). ATP contacts are provided by residues 359–367 and Lys381; that span reads LGQGGFGTV. Phosphotyrosine is present on Tyr426. Asp478 acts as the Proton acceptor in catalysis. Ser482 is modified (phosphoserine). At Thr518 the chain carries Phosphothreonine. Tyr526 is subject to Phosphotyrosine.

Belongs to the protein kinase superfamily. Ser/Thr protein kinase family. CRK subfamily.

Its subcellular location is the membrane. The catalysed reaction is L-seryl-[protein] + ATP = O-phospho-L-seryl-[protein] + ADP + H(+). It catalyses the reaction L-threonyl-[protein] + ATP = O-phospho-L-threonyl-[protein] + ADP + H(+). The chain is Putative cysteine-rich receptor-like protein kinase 39 (CRK39) from Arabidopsis thaliana (Mouse-ear cress).